A 132-amino-acid polypeptide reads, in one-letter code: Small ribosomal subunit protein uS8 (132 aa).

The protein belongs to the universal ribosomal protein uS8 family. In terms of assembly, part of the 30S ribosomal subunit. Contacts proteins S5 and S12.

One of the primary rRNA binding proteins, it binds directly to 16S rRNA central domain where it helps coordinate assembly of the platform of the 30S subunit. The polypeptide is Small ribosomal subunit protein uS8 (Alkaliphilus oremlandii (strain OhILAs) (Clostridium oremlandii (strain OhILAs))).